The chain runs to 464 residues: Rab GDP-dissociation inhibitor (464 aa).

The protein belongs to the Rab GDI family. As to quaternary structure, interacts with the GDP-bound form of Rab GTPase YPT7.

Functionally, regulates the GDP/GTP exchange reaction of YPT7 by inhibiting the dissociation of GDP from it, and the subsequent binding of GTP to YTP7. This Pyricularia oryzae (strain 70-15 / ATCC MYA-4617 / FGSC 8958) (Rice blast fungus) protein is Rab GDP-dissociation inhibitor (GDI1).